The chain runs to 179 residues: ATP-dependent protease subunit HslV (179 aa).

Residue Thr8 is part of the active site. Residues Gly163, Cys166, and Thr169 each coordinate Na(+).

Belongs to the peptidase T1B family. HslV subfamily. In terms of assembly, a double ring-shaped homohexamer of HslV is capped on each side by a ring-shaped HslU homohexamer. The assembly of the HslU/HslV complex is dependent on binding of ATP.

Its subcellular location is the cytoplasm. It carries out the reaction ATP-dependent cleavage of peptide bonds with broad specificity.. Allosterically activated by HslU binding. Protease subunit of a proteasome-like degradation complex believed to be a general protein degrading machinery. The protein is ATP-dependent protease subunit HslV of Solibacter usitatus (strain Ellin6076).